The chain runs to 120 residues: Chaperonin GroEL (120 aa).

23–27 (DGTTT) is an ATP binding site.

Belongs to the chaperonin (HSP60) family. Forms a cylinder of 14 subunits composed of two heptameric rings stacked back-to-back. Interacts with the co-chaperonin GroES.

Its subcellular location is the cytoplasm. The enzyme catalyses ATP + H2O + a folded polypeptide = ADP + phosphate + an unfolded polypeptide.. Together with its co-chaperonin GroES, plays an essential role in assisting protein folding. The GroEL-GroES system forms a nano-cage that allows encapsulation of the non-native substrate proteins and provides a physical environment optimized to promote and accelerate protein folding. The protein is Chaperonin GroEL of Mycobacterium asiaticum.